A 243-amino-acid polypeptide reads, in one-letter code: Pyridoxine 5'-phosphate synthase (243 aa).

Asn-7 contacts 3-amino-2-oxopropyl phosphate. Position 9 to 10 (9 to 10 (DH)) interacts with 1-deoxy-D-xylulose 5-phosphate. Arg-18 is a binding site for 3-amino-2-oxopropyl phosphate. The Proton acceptor role is filled by His-43. 1-deoxy-D-xylulose 5-phosphate contacts are provided by Arg-45 and His-50. Catalysis depends on Glu-70, which acts as the Proton acceptor. Thr-100 serves as a coordination point for 1-deoxy-D-xylulose 5-phosphate. The Proton donor role is filled by His-190. 3-amino-2-oxopropyl phosphate-binding positions include Gly-191 and 212–213 (GH).

Belongs to the PNP synthase family. As to quaternary structure, homooctamer; tetramer of dimers.

The protein resides in the cytoplasm. The enzyme catalyses 3-amino-2-oxopropyl phosphate + 1-deoxy-D-xylulose 5-phosphate = pyridoxine 5'-phosphate + phosphate + 2 H2O + H(+). It participates in cofactor biosynthesis; pyridoxine 5'-phosphate biosynthesis; pyridoxine 5'-phosphate from D-erythrose 4-phosphate: step 5/5. Its function is as follows. Catalyzes the complicated ring closure reaction between the two acyclic compounds 1-deoxy-D-xylulose-5-phosphate (DXP) and 3-amino-2-oxopropyl phosphate (1-amino-acetone-3-phosphate or AAP) to form pyridoxine 5'-phosphate (PNP) and inorganic phosphate. The chain is Pyridoxine 5'-phosphate synthase from Prochlorococcus marinus (strain MIT 9211).